Here is a 109-residue protein sequence, read N- to C-terminus: Large ribosomal subunit protein uL22 (109 aa).

The protein belongs to the universal ribosomal protein uL22 family. As to quaternary structure, part of the 50S ribosomal subunit.

Functionally, this protein binds specifically to 23S rRNA; its binding is stimulated by other ribosomal proteins, e.g. L4, L17, and L20. It is important during the early stages of 50S assembly. It makes multiple contacts with different domains of the 23S rRNA in the assembled 50S subunit and ribosome. Its function is as follows. The globular domain of the protein is located near the polypeptide exit tunnel on the outside of the subunit, while an extended beta-hairpin is found that lines the wall of the exit tunnel in the center of the 70S ribosome. This is Large ribosomal subunit protein uL22 from Methylobacillus flagellatus (strain ATCC 51484 / DSM 6875 / VKM B-1610 / KT).